Reading from the N-terminus, the 493-residue chain is Alpha-amylase-related protein (493 aa).

Positions 1 to 19 (MFKFALTLTLCLAGSLSLA) are cleaved as a signal peptide. Glutamine 20 is subject to Pyrrolidone carboxylic acid. A disulfide bridge connects residues cysteine 47 and cysteine 103. Residues asparagine 117, glutamine 168, and aspartate 177 each contribute to the Ca(2+) site. Cysteines 156 and 170 form a disulfide. Arginine 205 is a chloride binding site. Residue aspartate 207 is the Nucleophile of the active site. Histidine 211 is a binding site for Ca(2+). Glutamate 244 functions as the Proton donor in the catalytic mechanism. 2 residues coordinate chloride: asparagine 307 and arginine 342. Cystine bridges form between cysteine 375/cysteine 381, cysteine 417/cysteine 440, and cysteine 447/cysteine 459.

It belongs to the glycosyl hydrolase 13 family. Monomer. Ca(2+) serves as cofactor. It depends on chloride as a cofactor.

It localises to the secreted. It catalyses the reaction Endohydrolysis of (1-&gt;4)-alpha-D-glucosidic linkages in polysaccharides containing three or more (1-&gt;4)-alpha-linked D-glucose units.. The sequence is that of Alpha-amylase-related protein (Amyrel) from Drosophila simulans (Fruit fly).